Reading from the N-terminus, the 382-residue chain is Galactokinase (382 aa).

34–37 (EHTD) serves as a coordination point for substrate. Residue 124-130 (GAGLSSS) participates in ATP binding. Residues serine 130 and glutamate 162 each coordinate Mg(2+). The active-site Proton acceptor is aspartate 174. Tyrosine 223 serves as a coordination point for substrate.

The protein belongs to the GHMP kinase family. GalK subfamily.

Its subcellular location is the cytoplasm. It catalyses the reaction alpha-D-galactose + ATP = alpha-D-galactose 1-phosphate + ADP + H(+). It participates in carbohydrate metabolism; galactose metabolism. Catalyzes the transfer of the gamma-phosphate of ATP to D-galactose to form alpha-D-galactose-1-phosphate (Gal-1-P). The polypeptide is Galactokinase (Shigella boydii serotype 4 (strain Sb227)).